We begin with the raw amino-acid sequence, 311 residues long: Methionyl-tRNA formyltransferase (311 aa).

Residue 110–113 participates in (6S)-5,6,7,8-tetrahydrofolate binding; that stretch reads SLLP.

The protein belongs to the Fmt family.

The enzyme catalyses L-methionyl-tRNA(fMet) + (6R)-10-formyltetrahydrofolate = N-formyl-L-methionyl-tRNA(fMet) + (6S)-5,6,7,8-tetrahydrofolate + H(+). Attaches a formyl group to the free amino group of methionyl-tRNA(fMet). The formyl group appears to play a dual role in the initiator identity of N-formylmethionyl-tRNA by promoting its recognition by IF2 and preventing the misappropriation of this tRNA by the elongation apparatus. The polypeptide is Methionyl-tRNA formyltransferase (Streptococcus pyogenes serotype M6 (strain ATCC BAA-946 / MGAS10394)).